A 717-amino-acid polypeptide reads, in one-letter code: Copine family protein 5 (717 aa).

Positions 193–318 (YLGGIIVSAE…KYGPGSDNVY (126 aa)) constitute a C2 domain. A VWFA domain is found at 377-567 (ELDQRRFDGE…LNKSRIAETA (191 aa)).

The protein belongs to the copine family.

The sequence is that of Copine family protein 5 (cpna-5) from Caenorhabditis elegans.